Here is a 409-residue protein sequence, read N- to C-terminus: Adenosine deaminase (409 aa).

Zn(2+)-binding residues include His65, His67, His207, and Asp314.

Belongs to the metallo-dependent hydrolases superfamily. It depends on Zn(2+) as a cofactor.

The enzyme catalyses adenosine + H2O + H(+) = inosine + NH4(+). In terms of biological role, catalyzes the deamination of adenosine into inosine. Is also able to deaminate adenine, but with considerably less efficiency. Is not active toward 6-chloroadenine. The chain is Adenosine deaminase from Helicobacter pylori (strain ATCC 700392 / 26695) (Campylobacter pylori).